A 212-amino-acid chain; its full sequence is MEKFTTHTGVGVPLRRSNVDTDQIIPAVYLKRVTRTGFEDALFAAWRGNETFVLNQPAYTHGSVLVAGPDFGTGSSREHAVWALKDYGFRVVIASRFADIFRGNSGKQGLLAAQVAQDDVELIWKVLENSPGTEVTVDLAAKQVTVADIVAPFQIDDYTRWRLLEGLDDIGLTLQHADEITAFEATREPWRPLTLPAKHLPAVPITAARPVA.

The protein belongs to the LeuD family. LeuD type 1 subfamily. In terms of assembly, heterodimer of LeuC and LeuD.

It carries out the reaction (2R,3S)-3-isopropylmalate = (2S)-2-isopropylmalate. Its pathway is amino-acid biosynthesis; L-leucine biosynthesis; L-leucine from 3-methyl-2-oxobutanoate: step 2/4. Catalyzes the isomerization between 2-isopropylmalate and 3-isopropylmalate, via the formation of 2-isopropylmaleate. The chain is 3-isopropylmalate dehydratase small subunit from Beutenbergia cavernae (strain ATCC BAA-8 / DSM 12333 / CCUG 43141 / JCM 11478 / NBRC 16432 / NCIMB 13614 / HKI 0122).